The sequence spans 764 residues: Irregular chiasm C-roughest protein (764 aa).

An N-terminal signal peptide occupies residues 1–19 (MLHTMQLLLLATIVGMVRS). Topologically, residues 20-533 (SPYTSYQNQR…QAKKSVSLLM (514 aa)) are extracellular. Ig-like C2-type domains are found at residues 21–120 (PYTS…PAIR), 132–230 (PEAP…AKIR), 237–343 (PKVK…LDIS), 346–419 (PSFR…AEIS), and 430–530 (PAIG…KSVS). Cystine bridges form between cysteine 49-cysteine 107, cysteine 155-cysteine 214, cysteine 281-cysteine 325, cysteine 367-cysteine 408, and cysteine 450-cysteine 508. 5 N-linked (GlcNAc...) asparagine glycosylation sites follow: asparagine 211, asparagine 313, asparagine 393, asparagine 400, and asparagine 507. The helical transmembrane segment at 534-556 (TIVGGISVVAFLLVLTILVVVYI) threads the bilayer. Residues 557–764 (KCKKRTKLPP…SSLLPPPTAV (208 aa)) lie on the Cytoplasmic side of the membrane. 2 disordered regions span residues 640–660 (HQNQ…HHTQ) and 691–719 (NGLP…STTA). Polar residues predominate over residues 692–701 (GLPSLQSTTA). Over residues 702-719 (SVVSSSPNGSCSNQSTTA) the composition is skewed to low complexity.

In terms of tissue distribution, postembryonic expression is strong in the developing optic lobe and in the eye imaginal disk.

It is found in the membrane. Functionally, required for correct axonal pathway formation in the optic lobe and for programmed cell death in the developing retina. This is Irregular chiasm C-roughest protein (rst) from Drosophila melanogaster (Fruit fly).